The following is a 306-amino-acid chain: Leucotoxin LukEv (306 aa).

An N-terminal signal peptide occupies residues 1–23 (MLAATLSVGLIAPLASPIQESRA).

This sequence belongs to the aerolysin family. Toxicity requires sequential binding and synergistic association of a class S and a class F component which form heterooligomeric complexes. LukEv (class S) associates with LukDv (class F).

It is found in the secreted. Functionally, part of a bi-component leucotoxin that acts by forming pores in the membrane of the target cells. The activity of LukEv-LukDv to rabbit leukocytes is similar to that of the Panton-Valentine leucocidin (PVL). LukEv-LukDv is hemolytic to rabbit red blood cells although the activity is only 8% of gamma-hemolysin. In Staphylococcus aureus (strain NCTC 8325 / PS 47), this protein is Leucotoxin LukEv (lukEv).